The following is a 241-amino-acid chain: tRNA (guanine-N(7)-)-methyltransferase (241 aa).

The disordered stretch occupies residues Met-1–Arg-20. S-adenosyl-L-methionine contacts are provided by Glu-71, Glu-96, Asp-123, and Asp-146. Asp-146 is a catalytic residue. Substrate-binding positions include Lys-150, Asp-182, and Thr-219–Glu-222.

It belongs to the class I-like SAM-binding methyltransferase superfamily. TrmB family.

It catalyses the reaction guanosine(46) in tRNA + S-adenosyl-L-methionine = N(7)-methylguanosine(46) in tRNA + S-adenosyl-L-homocysteine. The protein operates within tRNA modification; N(7)-methylguanine-tRNA biosynthesis. In terms of biological role, catalyzes the formation of N(7)-methylguanine at position 46 (m7G46) in tRNA. This is tRNA (guanine-N(7)-)-methyltransferase from Pseudomonas fluorescens (strain ATCC BAA-477 / NRRL B-23932 / Pf-5).